Here is a 344-residue protein sequence, read N- to C-terminus: Serine/arginine-rich splicing factor 6 (344 aa).

Positions 1–72 (MPRVYIGRLS…ERVIVEHARG (72 aa)) constitute an RRM 1 domain. Phosphoserine is present on residues serine 45, serine 81, and serine 84. Residues 75–103 (RDRDGYSYGSRSGGGGYSSRRTSGRDKYG) are disordered. One can recognise an RRM 2 domain in the interval 110–183 (YRLIVENLSS…RNIRLIEDKP (74 aa)). Lysine 165 carries the N6-acetyllysine modification. The interval 176 to 344 (IRLIEDKPRT…RSRSRSSSRD (169 aa)) is disordered. Lysine 182 is covalently cross-linked (Glycyl lysine isopeptide (Lys-Gly) (interchain with G-Cter in SUMO2)). Positions 185–250 (TSHRRSYSGS…RKSRSKSKSK (66 aa)) are enriched in basic residues. Composition is skewed to basic and acidic residues over residues 264–273 (RSKDEYEKSR) and 280–291 (SPKENGKGDIKS). Phosphoserine is present on residues serine 297 and serine 299. The residue at position 303 (serine 303) is a Phosphoserine; by DYRK1A. Serine 314 and serine 316 each carry phosphoserine. The span at 322 to 344 (ATSRSRSRSRSKSRSRSRSSSRD) shows a compositional bias: basic residues.

Belongs to the splicing factor SR family. As to quaternary structure, binds SREK1/SFRS12. Interacts with DYRK1A. Post-translationally, extensively phosphorylated on serine residues in the RS domain. Phosphorylated by DYRK1A, probably in the RS domain. Phosphorylation by DYRK1A modulates alternative splice site selection and inhibits the expression of MAPT/Tau exon 10.

It localises to the nucleus. It is found in the nucleus speckle. Plays a role in constitutive splicing and modulates the selection of alternative splice sites. Plays a role in the alternative splicing of MAPT/Tau exon 10. Binds to alternative exons of TNC pre-mRNA and promotes the expression of alternatively spliced TNC. Plays a role in wound healing and in the regulation of keratinocyte differentiation and proliferation via its role in alternative splicing. This chain is Serine/arginine-rich splicing factor 6 (SRSF6), found in Homo sapiens (Human).